The following is a 256-amino-acid chain: MGQKIHPTGFRLGVIKEHRSRWFADPARYPALLQEDDQIRTYLTKQLSSAGLADIQIERKADQIDLEIRAARPGVVVGRGGSSLETLRQGLQKELSALAGQSPGSRGGGERTIRINVVEVTRADAEATLLAENIAQQLERRIAFRRIVRQVIQRAQRAGVQGIKIQIAGRLNGAEIARTEWTREGRIPLHTLRADIDYAEHLAHTTFGIIGVKVWVFKGEVLPGQERHEQKFPLQQPKRRQQRRRPTFEDRSAQEA.

Positions 39 to 121 constitute a KH type-2 domain; that stretch reads IRTYLTKQLS…TIRINVVEVT (83 aa). Residues 227 to 256 form a disordered region; sequence RHEQKFPLQQPKRRQQRRRPTFEDRSAQEA. Residues 246–256 show a composition bias toward basic and acidic residues; sequence PTFEDRSAQEA.

Belongs to the universal ribosomal protein uS3 family. Part of the 30S ribosomal subunit. Forms a tight complex with proteins S10 and S14.

Its function is as follows. Binds the lower part of the 30S subunit head. Binds mRNA in the 70S ribosome, positioning it for translation. The protein is Small ribosomal subunit protein uS3 of Synechococcus sp. (strain JA-2-3B'a(2-13)) (Cyanobacteria bacterium Yellowstone B-Prime).